We begin with the raw amino-acid sequence, 250 residues long: 5'-nucleotidase SurE (250 aa).

A divalent metal cation-binding residues include Asp-8, Asp-9, Ser-40, and Asn-94.

It belongs to the SurE nucleotidase family. Requires a divalent metal cation as cofactor.

Its subcellular location is the cytoplasm. It carries out the reaction a ribonucleoside 5'-phosphate + H2O = a ribonucleoside + phosphate. In terms of biological role, nucleotidase that shows phosphatase activity on nucleoside 5'-monophosphates. This Wolbachia sp. subsp. Brugia malayi (strain TRS) protein is 5'-nucleotidase SurE.